Reading from the N-terminus, the 416-residue chain is Isobutyryl-CoA dehydrogenase, mitochondrial (416 aa).

Residues 1 to 23 (MMLRGGCQRVGARLRGLRRGPRG) constitute a mitochondrion transit peptide. N6-acetyllysine; alternate is present on K51. K51 is subject to N6-succinyllysine; alternate. FAD contacts are provided by residues 159 to 168 (YCLTEPGSGS) and 192 to 194 (FIS). A substrate-binding site is contributed by S168. K232 carries the post-translational modification N6-acetyllysine. At K272 the chain carries N6-succinyllysine. 275–278 (NGGR) contacts substrate. FAD is bound by residues R303, 313–314 (SQ), and 372–376 (QMHGG). The active-site Proton acceptor is the E399. 401–403 (SNE) provides a ligand contact to FAD. Residue R411 participates in substrate binding.

The protein belongs to the acyl-CoA dehydrogenase family. Homotetramer, formed by a dimer of dimers. The cofactor is FAD.

Its subcellular location is the mitochondrion. The catalysed reaction is 2-methylpropanoyl-CoA + oxidized [electron-transfer flavoprotein] + H(+) = 2-methylpropenoyl-CoA + reduced [electron-transfer flavoprotein]. It carries out the reaction (2S)-2-methylbutanoyl-CoA + oxidized [electron-transfer flavoprotein] + H(+) = (2E)-2-methylbut-2-enoyl-CoA + reduced [electron-transfer flavoprotein]. The enzyme catalyses propanoyl-CoA + oxidized [electron-transfer flavoprotein] + H(+) = acryloyl-CoA + reduced [electron-transfer flavoprotein]. The protein operates within amino-acid degradation; L-valine degradation. In terms of biological role, isobutyryl-CoA dehydrogenase which catalyzes the conversion of 2-methylpropanoyl-CoA to (2E)-2-methylpropenoyl-CoA in the valine catabolic pathway. To a lesser extent, also able to catalyze the oxidation of (2S)-2-methylbutanoyl-CoA. The sequence is that of Isobutyryl-CoA dehydrogenase, mitochondrial (ACAD8) from Bos taurus (Bovine).